A 189-amino-acid chain; its full sequence is UPF0316 protein Sca_1484 (189 aa).

The next 3 helical transmembrane spans lie at 8-28 (PWLM…CLTV), 40-60 (VAAA…GLVM), and 66-86 (FQNI…GMKI).

This sequence belongs to the UPF0316 family.

The protein resides in the cell membrane. This Staphylococcus carnosus (strain TM300) protein is UPF0316 protein Sca_1484.